The sequence spans 494 residues: Alpha-amylase-related protein (494 aa).

Residues 1-20 (MIKFALALTLCLAGASLSLA) form the signal peptide. Gln-21 carries the post-translational modification Pyrrolidone carboxylic acid. A disulfide bridge connects residues Cys-48 and Cys-104. 3 residues coordinate Ca(2+): Asn-118, Gln-169, and Asp-178. Cys-157 and Cys-171 are disulfide-bonded. Arg-206 is a binding site for chloride. Residue Asp-208 is the Nucleophile of the active site. His-212 contacts Ca(2+). Glu-245 (proton donor) is an active-site residue. Positions 308 and 343 each coordinate chloride. 3 disulfide bridges follow: Cys-376-Cys-382, Cys-418-Cys-441, and Cys-448-Cys-460.

It belongs to the glycosyl hydrolase 13 family. In terms of assembly, monomer. It depends on Ca(2+) as a cofactor. The cofactor is chloride.

It is found in the secreted. It carries out the reaction Endohydrolysis of (1-&gt;4)-alpha-D-glucosidic linkages in polysaccharides containing three or more (1-&gt;4)-alpha-linked D-glucose units.. This Drosophila jambulina (Fruit fly) protein is Alpha-amylase-related protein (Amyrel).